A 357-amino-acid polypeptide reads, in one-letter code: Holliday junction branch migration complex subunit RuvB (357 aa).

A large ATPase domain (RuvB-L) region spans residues 3–193 (WDDTTDAEAA…FGFTAHMEFY (191 aa)). ATP contacts are provided by residues Leu32, Arg33, Gly74, Lys77, Thr78, Thr79, 140–142 (EDF), Arg183, Tyr193, and Arg230. Thr78 contributes to the Mg(2+) binding site. The small ATPAse domain (RuvB-S) stretch occupies residues 194–264 (GPAELERVIH…IAAAALAVYE (71 aa)). A head domain (RuvB-H) region spans residues 267–357 (ARGLDRLDRG…GNGQPDLFGA (91 aa)). Residues Arg303, Arg322, and Arg327 each coordinate DNA. Positions 337–357 (LGLTPPRPQSSGNGQPDLFGA) are disordered.

The protein belongs to the RuvB family. In terms of assembly, homohexamer. Forms an RuvA(8)-RuvB(12)-Holliday junction (HJ) complex. HJ DNA is sandwiched between 2 RuvA tetramers; dsDNA enters through RuvA and exits via RuvB. An RuvB hexamer assembles on each DNA strand where it exits the tetramer. Each RuvB hexamer is contacted by two RuvA subunits (via domain III) on 2 adjacent RuvB subunits; this complex drives branch migration. In the full resolvosome a probable DNA-RuvA(4)-RuvB(12)-RuvC(2) complex forms which resolves the HJ.

Its subcellular location is the cytoplasm. The catalysed reaction is ATP + H2O = ADP + phosphate + H(+). Its function is as follows. The RuvA-RuvB-RuvC complex processes Holliday junction (HJ) DNA during genetic recombination and DNA repair, while the RuvA-RuvB complex plays an important role in the rescue of blocked DNA replication forks via replication fork reversal (RFR). RuvA specifically binds to HJ cruciform DNA, conferring on it an open structure. The RuvB hexamer acts as an ATP-dependent pump, pulling dsDNA into and through the RuvAB complex. RuvB forms 2 homohexamers on either side of HJ DNA bound by 1 or 2 RuvA tetramers; 4 subunits per hexamer contact DNA at a time. Coordinated motions by a converter formed by DNA-disengaged RuvB subunits stimulates ATP hydrolysis and nucleotide exchange. Immobilization of the converter enables RuvB to convert the ATP-contained energy into a lever motion, pulling 2 nucleotides of DNA out of the RuvA tetramer per ATP hydrolyzed, thus driving DNA branch migration. The RuvB motors rotate together with the DNA substrate, which together with the progressing nucleotide cycle form the mechanistic basis for DNA recombination by continuous HJ branch migration. Branch migration allows RuvC to scan DNA until it finds its consensus sequence, where it cleaves and resolves cruciform DNA. The polypeptide is Holliday junction branch migration complex subunit RuvB (Streptomyces coelicolor (strain ATCC BAA-471 / A3(2) / M145)).